Reading from the N-terminus, the 137-residue chain is ATP synthase epsilon chain, sodium ion specific (137 aa).

The protein belongs to the ATPase epsilon chain family. In terms of assembly, F-type ATPases have 2 components, CF(1) - the catalytic core - and CF(0) - the membrane proton channel. CF(1) has five subunits: alpha(3), beta(3), gamma(1), delta(1), epsilon(1). CF(0) has three main subunits: a, b and c.

It localises to the cell inner membrane. In terms of biological role, produces ATP from ADP in the presence of a sodium gradient across the membrane. The protein is ATP synthase epsilon chain, sodium ion specific (atpC) of Propionigenium modestum.